A 257-amino-acid chain; its full sequence is tRNA dimethylallyltransferase (257 aa).

An ATP-binding site is contributed by 15–22 (GPTASGKS). 17 to 22 (TASGKS) is a binding site for substrate.

Belongs to the IPP transferase family. As to quaternary structure, monomer. Mg(2+) serves as cofactor.

The catalysed reaction is adenosine(37) in tRNA + dimethylallyl diphosphate = N(6)-dimethylallyladenosine(37) in tRNA + diphosphate. Functionally, catalyzes the transfer of a dimethylallyl group onto the adenine at position 37 in tRNAs that read codons beginning with uridine, leading to the formation of N6-(dimethylallyl)adenosine (i(6)A). This chain is tRNA dimethylallyltransferase, found in Oenococcus oeni (strain ATCC BAA-331 / PSU-1).